A 276-amino-acid chain; its full sequence is Putative ankyrin repeat protein R838 (276 aa).

4 ANK repeats span residues 134–163 (DGDN…DPRS), 164–193 (DYDY…DISS), 195–223 (NHWP…DVRA), and 225–253 (NYNP…EIGS). Residues 254 to 276 (VSDDDTYDSDSSDYSEDDSESIN) are disordered. The span at 255-276 (SDDDTYDSDSSDYSEDDSESIN) shows a compositional bias: acidic residues.

This is Putative ankyrin repeat protein R838 from Acanthamoeba polyphaga (Amoeba).